The primary structure comprises 353 residues: DNA polymerase IV (353 aa).

In terms of domain architecture, UmuC spans 14-198; that stretch reads IIHIDMDAFF…MDISKFHGVG (185 aa). Mg(2+)-binding residues include aspartate 18 and aspartate 116. Glutamate 117 is an active-site residue.

The protein belongs to the DNA polymerase type-Y family. Monomer. Mg(2+) serves as cofactor.

Its subcellular location is the cytoplasm. The catalysed reaction is DNA(n) + a 2'-deoxyribonucleoside 5'-triphosphate = DNA(n+1) + diphosphate. In terms of biological role, poorly processive, error-prone DNA polymerase involved in untargeted mutagenesis. Copies undamaged DNA at stalled replication forks, which arise in vivo from mismatched or misaligned primer ends. These misaligned primers can be extended by PolIV. Exhibits no 3'-5' exonuclease (proofreading) activity. May be involved in translesional synthesis, in conjunction with the beta clamp from PolIII. The sequence is that of DNA polymerase IV from Streptococcus pneumoniae serotype 4 (strain ATCC BAA-334 / TIGR4).